A 361-amino-acid polypeptide reads, in one-letter code: Serine/threonine-protein kinase SRK2I (361 aa).

The Protein kinase domain occupies 22 to 278 (YDFVKDIGSG…IPEIKTHSWF (257 aa)). ATP contacts are provided by residues 28–36 (IGSGNFGVA) and Lys-51. Asp-141 functions as the Proton acceptor in the catalytic mechanism.

The protein belongs to the protein kinase superfamily. Ser/Thr protein kinase family. In terms of assembly, interacts with ABI1. Interacts with I-2 and TOPP1. Interacts with FREE1 (via C-terminus). In terms of processing, autophosphorylated in vitro. In terms of tissue distribution, expressed at low levels in seeds, seedlings, roots (especially in tips), stems, leaves, shoots, flowers and siliques.

It catalyses the reaction L-seryl-[protein] + ATP = O-phospho-L-seryl-[protein] + ADP + H(+). The enzyme catalyses L-threonyl-[protein] + ATP = O-phospho-L-threonyl-[protein] + ADP + H(+). Its activity is regulated as follows. Activated by autophosphorylation of its activation loop. Together with SRK2D, key component and activator of the abscisic acid (ABA) signaling pathway that regulates numerous ABA responses, such as seed germination, Pro accumulation, root growth inhibition, dormancy and seedling growth, and, to a lesser extent, stomatal closure. In response to ABA, phosphorylates the ESCRT-I complex component FREE1, which is required for ABA-induced FREE1 nuclear import. The protein is Serine/threonine-protein kinase SRK2I (SRK2I) of Arabidopsis thaliana (Mouse-ear cress).